The primary structure comprises 707 residues: Heat shock protein hsp88 (707 aa).

Residues 662–692 (EAEKAAKKAEEEARKAKEAAEKAAQEGAKDD) show a composition bias toward basic and acidic residues. The interval 662–707 (EAEKAAKKAEEEARKAKEAAEKAAQEGAKDDEMTDADAPKPVVEEA) is disordered.

This sequence belongs to the heat shock protein 70 family. In terms of assembly, binds hsp30 independent of temperature or substrate. The N-terminus is blocked.

Its subcellular location is the cytoplasm. This Neurospora crassa (strain ATCC 24698 / 74-OR23-1A / CBS 708.71 / DSM 1257 / FGSC 987) protein is Heat shock protein hsp88 (hsp88).